The primary structure comprises 232 residues: Flagellar L-ring protein (232 aa).

Positions 1-21 are cleaved as a signal peptide; that stretch reads MQKNAAHTYAISSLLVLSLTG. Cys22 is lipidated: N-palmitoyl cysteine. A lipid anchor (S-diacylglycerol cysteine) is attached at Cys22.

Belongs to the FlgH family. In terms of assembly, the basal body constitutes a major portion of the flagellar organelle and consists of four rings (L,P,S, and M) mounted on a central rod.

The protein resides in the cell outer membrane. It localises to the bacterial flagellum basal body. Functionally, assembles around the rod to form the L-ring and probably protects the motor/basal body from shearing forces during rotation. In Shigella flexneri, this protein is Flagellar L-ring protein (flgH).